A 157-amino-acid chain; its full sequence is Large ribosomal subunit protein eL24 (157 aa).

The interval 95 to 157 (NQKPEVRKAQ…VSAPRVGGKR (63 aa)) is disordered. Residues 96-117 (QKPEVRKAQREQAIRAAKEAKK) are compositionally biased toward basic and acidic residues. Low complexity predominate over residues 123–145 (KKQTTQSSKAPAKSAQKQKIAKP).

The protein belongs to the eukaryotic ribosomal protein eL24 family. As to quaternary structure, component of the large ribosomal subunit.

It localises to the cytoplasm. Component of the large ribosomal subunit. The ribosome is a large ribonucleoprotein complex responsible for the synthesis of proteins in the cell. Plays an essential role in early embryonic development. The sequence is that of Large ribosomal subunit protein eL24 (rpl24) from Danio rerio (Zebrafish).